The following is a 203-amino-acid chain: Dephospho-CoA kinase (203 aa).

The DPCK domain maps to 4–203; sequence VIGITGGIAT…EEGYIQSESE (200 aa). 12–17 is an ATP binding site; that stretch reads ATGKST.

It belongs to the CoaE family.

Its subcellular location is the cytoplasm. It catalyses the reaction 3'-dephospho-CoA + ATP = ADP + CoA + H(+). Its pathway is cofactor biosynthesis; coenzyme A biosynthesis; CoA from (R)-pantothenate: step 5/5. Functionally, catalyzes the phosphorylation of the 3'-hydroxyl group of dephosphocoenzyme A to form coenzyme A. This Staphylococcus epidermidis (strain ATCC 35984 / DSM 28319 / BCRC 17069 / CCUG 31568 / BM 3577 / RP62A) protein is Dephospho-CoA kinase.